Consider the following 315-residue polypeptide: Aspartate carbamoyltransferase catalytic subunit (315 aa).

2 residues coordinate carbamoyl phosphate: R64 and T65. K92 provides a ligand contact to L-aspartate. Carbamoyl phosphate is bound by residues R114, H142, and Q145. L-aspartate contacts are provided by R175 and R229. The carbamoyl phosphate site is built by G270 and P271.

The protein belongs to the aspartate/ornithine carbamoyltransferase superfamily. ATCase family. In terms of assembly, heterododecamer (2C3:3R2) of six catalytic PyrB chains organized as two trimers (C3), and six regulatory PyrI chains organized as three dimers (R2).

The catalysed reaction is carbamoyl phosphate + L-aspartate = N-carbamoyl-L-aspartate + phosphate + H(+). Its pathway is pyrimidine metabolism; UMP biosynthesis via de novo pathway; (S)-dihydroorotate from bicarbonate: step 2/3. Catalyzes the condensation of carbamoyl phosphate and aspartate to form carbamoyl aspartate and inorganic phosphate, the committed step in the de novo pyrimidine nucleotide biosynthesis pathway. This is Aspartate carbamoyltransferase catalytic subunit from Methylorubrum extorquens (strain CM4 / NCIMB 13688) (Methylobacterium extorquens).